The sequence spans 73 residues: Putative defensin-like protein 42 (73 aa).

Intrachain disulfides connect C6–C58, C18–C41, C27–C50, and C31–C52.

It belongs to the DEFL family.

The chain is Putative defensin-like protein 42 from Arabidopsis thaliana (Mouse-ear cress).